Reading from the N-terminus, the 212-residue chain is Ribonuclease P protein component 3 (212 aa).

The protein belongs to the eukaryotic/archaeal RNase P protein component 3 family. In terms of assembly, consists of a catalytic RNA component and at least 5 protein subunits. Forms a heterotetrameric subcomplex with Rnp2. Reconstituted enzyme missing individual protein subunits is suboptimally active, showing each subunit contributes to optimization of activity.

It is found in the cytoplasm. The enzyme catalyses Endonucleolytic cleavage of RNA, removing 5'-extranucleotides from tRNA precursor.. Functionally, part of ribonuclease P, a protein complex that generates mature tRNA molecules by cleaving their 5'-ends. Not absolutely essential for activity in vitro, however it strongly stimulates activity. Binds RNase P RNA. The protein is Ribonuclease P protein component 3 of Pyrococcus horikoshii (strain ATCC 700860 / DSM 12428 / JCM 9974 / NBRC 100139 / OT-3).